The following is a 481-amino-acid chain: MMIMPEEGHPLSRMLASYPPQALRCDLPAGSLFGTDGIRGKAGDLLTAPFALQVGYWAGQVLQETAARRAPVIIGQDSRNSSDMLAMAIAAGLTASGLEVWHVGLCPTPCVSYLARTTDAIGGIMISASHNPPEDNGIKFFSDAGTKLLKDLSAKIEAGLRGDRLENILSQTNNCGSYQHQKELTQQYRNAVFATLPQGLSLDGLKIVLDLAWGASVHLAPELFQALGAEVIALHHQPDGNKINVNCGSTHIDQLQGAVQFHNADLGFAFDGDADRVIAVDNTGRIVDGDYILYLWGKQLQAAGQLPNNLIVGTVMANLGFERAWEKLGGQLHRTAVGDQYVQAAMWQTGAMLGGEQSGHILCHHHSVSGDGIQTALHLAALVREAGVPLNELIDQSFQTYPQFLKNVRVEDRDRRLNWQNCDVLQTEIAKAEAAMGDKGRVLVRASGTEPVIRVMVEAEEQYLAEYWTQHLVNVVQSHLG.

The active-site Phosphoserine intermediate is the Ser129. Mg(2+) contacts are provided by Ser129, Asp271, Asp273, and Asp275. Ser129 carries the phosphoserine modification.

It belongs to the phosphohexose mutase family. It depends on Mg(2+) as a cofactor. Activated by phosphorylation.

It catalyses the reaction alpha-D-glucosamine 1-phosphate = D-glucosamine 6-phosphate. Its function is as follows. Catalyzes the conversion of glucosamine-6-phosphate to glucosamine-1-phosphate. This chain is Phosphoglucosamine mutase, found in Picosynechococcus sp. (strain ATCC 27264 / PCC 7002 / PR-6) (Agmenellum quadruplicatum).